The following is an 83-amino-acid chain: Small ribosomal subunit protein bS16 (83 aa).

The protein belongs to the bacterial ribosomal protein bS16 family.

This is Small ribosomal subunit protein bS16 from Borrelia hermsii (strain HS1 / DAH).